The following is a 192-amino-acid chain: Ribosome maturation factor RimM (192 aa).

In terms of domain architecture, PRC barrel spans 99-186 (ADEYHVSELV…RIEIAPPPGL (88 aa)).

The protein belongs to the RimM family. In terms of assembly, binds ribosomal protein uS19.

It is found in the cytoplasm. Functionally, an accessory protein needed during the final step in the assembly of 30S ribosomal subunit, possibly for assembly of the head region. Essential for efficient processing of 16S rRNA. May be needed both before and after RbfA during the maturation of 16S rRNA. It has affinity for free ribosomal 30S subunits but not for 70S ribosomes. The chain is Ribosome maturation factor RimM from Microcystis aeruginosa (strain NIES-843 / IAM M-2473).